Reading from the N-terminus, the 209-residue chain is Large ribosomal subunit protein bL9 (209 aa).

Residues 181 to 209 are disordered; that stretch reads EASEEGQELAAQREATEDAGADESEETEA. Over residues 197-209 the composition is skewed to acidic residues; the sequence is EDAGADESEETEA.

Belongs to the bacterial ribosomal protein bL9 family.

Binds to the 23S rRNA. This Maricaulis maris (strain MCS10) (Caulobacter maris) protein is Large ribosomal subunit protein bL9.